The primary structure comprises 330 residues: MATGQRLMRAIRVSEFGGPEVLKLQSDVAVPIPEEHQVLIKVQACGVNPVDTYIRSGTYSRKPRLPYTPGLDVAGLIEAVGERVSAFKKGDRVFTTSTVSGGYAEYALAADHTVYKLPGELDFQKGAAIGVPYFTAYRALLHSACAKAGESVLVHGASGGVGLAACQIARACCFKVLGTAGTEEGQRVVLQNGAHEVFNHREDINIDKIKKSVGEKGIDVIIEMLANVNLSNDLNLLSQGGRVIIVGSKGPVEINPRDTMTKESSIKGVTLFSSTKEEFQQFAAALQAGMEIGWLRPVIGSQYPLEKVAQAHEDLTHSSGAAGKVVLLLK.

Ala2 is subject to N-acetylalanine. Residue Lys23 is modified to N6-acetyllysine. NADP(+) contacts are provided by residues Tyr53, 158–161, Gly181, His200, Asn229, 246–249, and 269–271; these read SGGV, VGSK, and VTL. Ser248 is modified (phosphoserine).

Belongs to the zinc-containing alcohol dehydrogenase family. Quinone oxidoreductase subfamily. In terms of assembly, homotetramer.

It is found in the cytoplasm. It catalyses the reaction 2 a quinone + NADPH + H(+) = 2 a 1,4-benzosemiquinone + NADP(+). Its function is as follows. Does not have alcohol dehydrogenase activity. Binds NADP and acts through a one-electron transfer process. Orthoquinones, such as 1,2-naphthoquinone or 9,10-phenanthrenequinone, are the best substrates (in vitro). May act in the detoxification of xenobiotics. Interacts with (AU)-rich elements (ARE) in the 3'-UTR of target mRNA species and enhances their stability. NADPH binding interferes with mRNA binding. This chain is Quinone oxidoreductase (CRYZ), found in Lama guanicoe (Guanaco).